The following is a 130-amino-acid chain: Small ribosomal subunit protein uS8 (130 aa).

This sequence belongs to the universal ribosomal protein uS8 family. In terms of assembly, part of the 30S ribosomal subunit. Contacts proteins S5 and S12.

One of the primary rRNA binding proteins, it binds directly to 16S rRNA central domain where it helps coordinate assembly of the platform of the 30S subunit. The sequence is that of Small ribosomal subunit protein uS8 from Shewanella halifaxensis (strain HAW-EB4).